The sequence spans 86 residues: Exodeoxyribonuclease 7 small subunit (86 aa).

Residues 67–86 (LSDPAQPEASEPFDPPSHDG) form a disordered region.

Belongs to the XseB family. Heterooligomer composed of large and small subunits.

It localises to the cytoplasm. The catalysed reaction is Exonucleolytic cleavage in either 5'- to 3'- or 3'- to 5'-direction to yield nucleoside 5'-phosphates.. Functionally, bidirectionally degrades single-stranded DNA into large acid-insoluble oligonucleotides, which are then degraded further into small acid-soluble oligonucleotides. The protein is Exodeoxyribonuclease 7 small subunit of Stenotrophomonas maltophilia (strain K279a).